A 132-amino-acid chain; its full sequence is Riboflavin kinase (132 aa).

Position 10–15 (10–15 (GLGEGR)) interacts with CDP. Residues Thr-39 and Asn-41 each contribute to the Mg(2+) site. Thr-95, Tyr-96, and Glu-103 together coordinate FMN. 108–111 (MKLR) lines the CDP pocket.

In terms of assembly, monomer. It depends on Mg(2+) as a cofactor.

The catalysed reaction is riboflavin + CTP = CDP + FMN + H(+). Its pathway is cofactor biosynthesis; FMN biosynthesis; FMN from riboflavin (CTP route): step 1/1. Functionally, catalyzes the CTP-dependent phosphorylation of riboflavin (vitamin B2) to form flavin mononucleotide (FMN). Can also utilize UTP as the phosphate donor, although less efficiently, and it is unclear if ATP and GTP can also serve as substrates or not. This Methanocaldococcus jannaschii (strain ATCC 43067 / DSM 2661 / JAL-1 / JCM 10045 / NBRC 100440) (Methanococcus jannaschii) protein is Riboflavin kinase (ribK).